The primary structure comprises 315 residues: Methionyl-tRNA formyltransferase (315 aa).

113–116 (SLLP) lines the (6S)-5,6,7,8-tetrahydrofolate pocket.

It belongs to the Fmt family.

It catalyses the reaction L-methionyl-tRNA(fMet) + (6R)-10-formyltetrahydrofolate = N-formyl-L-methionyl-tRNA(fMet) + (6S)-5,6,7,8-tetrahydrofolate + H(+). Attaches a formyl group to the free amino group of methionyl-tRNA(fMet). The formyl group appears to play a dual role in the initiator identity of N-formylmethionyl-tRNA by promoting its recognition by IF2 and preventing the misappropriation of this tRNA by the elongation apparatus. This Escherichia coli O127:H6 (strain E2348/69 / EPEC) protein is Methionyl-tRNA formyltransferase.